The sequence spans 383 residues: S-adenosylmethionine synthase (383 aa).

His15 is an ATP binding site. Mg(2+) is bound at residue Asp17. Residue Glu43 participates in K(+) binding. Residues Glu56 and Gln99 each contribute to the L-methionine site. A flexible loop region spans residues 99-109; that stretch reads QSPDINQGVDR. ATP contacts are provided by residues 164–166, 230–231, Asp239, 245–246, Ala262, and Lys266; these read DAK, RF, and RK. L-methionine is bound at residue Asp239. An L-methionine-binding site is contributed by Lys270.

This sequence belongs to the AdoMet synthase family. As to quaternary structure, homotetramer; dimer of dimers. Mg(2+) serves as cofactor. It depends on K(+) as a cofactor.

It localises to the cytoplasm. The catalysed reaction is L-methionine + ATP + H2O = S-adenosyl-L-methionine + phosphate + diphosphate. It functions in the pathway amino-acid biosynthesis; S-adenosyl-L-methionine biosynthesis; S-adenosyl-L-methionine from L-methionine: step 1/1. Catalyzes the formation of S-adenosylmethionine (AdoMet) from methionine and ATP. The overall synthetic reaction is composed of two sequential steps, AdoMet formation and the subsequent tripolyphosphate hydrolysis which occurs prior to release of AdoMet from the enzyme. The sequence is that of S-adenosylmethionine synthase from Pseudoalteromonas translucida (strain TAC 125).